The following is a 441-amino-acid chain: Vacuolar cation/proton exchanger 5 (441 aa).

A lipid anchor (N-myristoyl glycine) is attached at glycine 2. Topologically, residues 2 to 69 are cytoplasmic; that stretch reads GCCKVPALIQ…PNNSVLQSFK (68 aa). S-palmitoyl cysteine attachment occurs at residues cysteine 3 and cysteine 4. The helical transmembrane segment at 70-90 threads the bilayer; it reads IVILSNKLNLLLPFGPLAILL. At 91–97 the chain is on the extracellular side; that stretch reads HYLTDNK. A helical transmembrane segment spans residues 98–118; sequence GWIFLLSLVGITPLAERLGYA. At 119–129 the chain is on the cytoplasmic side; the sequence is TEQLACYTGST. The helical transmembrane segment at 130-150 threads the bilayer; sequence VGGLLNATFGNVTELIISIFA. The cation selection stretch occupies residues 139–174; sequence GNVTELIISIFALKSGMIRVVQLTLLGSILSNMLLV. Topologically, residues 151–165 are extracellular; it reads LKSGMIRVVQLTLLG. Residues 166–186 form a helical membrane-spanning segment; sequence SILSNMLLVLGCAFFCGGLVF. The Cytoplasmic segment spans residues 187-197; the sequence is SQKEQVFDKGN. Residues 198–218 form a helical membrane-spanning segment; that stretch reads AVVNSGLLLMAVMGLLFPAVL. Residues 219 to 231 are Extracellular-facing; the sequence is HYTHSEVHAGSSE. A helical membrane pass occupies residues 232–252; it reads LALSRFSSCIMLVAYAAYLFF. Residues 253 to 286 lie on the Cytoplasmic side of the membrane; it reads QLKSQPSSYTPLTEETNQNEETSDDDEDPEISKW. The helical transmembrane segment at 287–307 threads the bilayer; that stretch reads EAIIWLSILTAWVSLLSGYLV. Over 308-311 the chain is Extracellular; sequence DAIE. Residues 312–332 form a helical membrane-spanning segment; that stretch reads GASVSWKIPISFISVILLPIV. Over 333–354 the chain is Cytoplasmic; sequence GNAAEHAGAIMFAMKDKLDLSL. A cation selection region spans residues 333–368; that stretch reads GNAAEHAGAIMFAMKDKLDLSLGVAIGSSIQISMFA. Residues 355–375 form a helical membrane-spanning segment; sequence GVAIGSSIQISMFAVPFCVVI. Over 376–384 the chain is Extracellular; that stretch reads GWMMGAQMD. A helical membrane pass occupies residues 385–405; sequence LNFQLFETATLFITVIVVAFF. Over 406–412 the chain is Cytoplasmic; it reads LQEGTSN. Residues 413–433 traverse the membrane as a helical segment; that stretch reads YFKGLMLILCYLIVAASFFVH. At 434–441 the chain is on the extracellular side; the sequence is EDPHQDDI.

It belongs to the Ca(2+):cation antiporter (CaCA) (TC 2.A.19) family. Cation/proton exchanger (CAX) subfamily.

The protein localises to the vacuole membrane. In terms of biological role, vacuolar cation/proton exchanger (CAX). Translocates Ca(2+) and other metal ions into vacuoles using the proton gradient formed by H(+)-ATPase and H(+)-pyrophosphatase. In Arabidopsis thaliana (Mouse-ear cress), this protein is Vacuolar cation/proton exchanger 5 (CAX5).